Consider the following 517-residue polypeptide: MTSPEHSEDERQPLLTKPSGPDESQSGFGSSWIQFRKPSAMWLLPMYTLYAITAGSLIIPEFNATLGLICHQRHSPDNSDFQLALERCDGNTQVQSDLSQFYIYGTVLSGILGAIAGPNLMGFSDKIGRKPILLISVLGPLIADIIVLAALHYPDEVDVKWLLVGYAMDGLSGSIITATTASQAYISDISAPEDRVSSFSYIQAAFTSAFALGPLIAGGLLSVFDSLIQAYWLAFTIHLSLIVLFTLALPESLKSTAESRGTEENTTNQPKAEAEAGFFEVISSARGLIPSDRSSKTNMYIVAVTEAALFGVSMGLVPLQLAYSAYMFHWRSSAQSAFLTGVNLWSILVLVAVVPLFMSRIQRRQQAEGQSEGQPQTAFGPGELGTIRTCLLLQVAGYITIAVVHSPLGVIAGSLIAGSGAPLSPTLTSCLTKMVPEERQGVLLGAVSFLHAISRILLPSGMNYVYGSTVGTQPYALFALLGFGSGIFLVASMFIGNKSTLPDIPRFPYLMNYSSRS.

Residues 1–12 (MTSPEHSEDERQ) are compositionally biased toward basic and acidic residues. A disordered region spans residues 1–28 (MTSPEHSEDERQPLLTKPSGPDESQSGF). The chain crosses the membrane as a helical span at residues 40 to 60 (AMWLLPMYTLYAITAGSLIIP). Asparagine 63 is a glycosylation site (N-linked (GlcNAc...) asparagine). The next 5 helical transmembrane spans lie at 103–123 (IYGT…LMGF), 131–151 (PILL…LAAL), 161–181 (WLLV…ATTA), 204–224 (AAFT…LSVF), and 230–250 (AYWL…LALP). A glycan (N-linked (GlcNAc...) asparagine) is linked at asparagine 265. 5 consecutive transmembrane segments (helical) span residues 299–319 (MYIV…LVPL), 338–358 (FLTG…PLFM), 391–411 (LLLQ…LGVI), 442–462 (VLLG…PSGM), and 476–496 (ALFA…MFIG). Asparagine 497 and asparagine 512 each carry an N-linked (GlcNAc...) asparagine glycan.

It belongs to the major facilitator superfamily. TCR/Tet family.

It localises to the membrane. The protein operates within secondary metabolite biosynthesis. Its function is as follows. MFS-type transporter; part of the cluster that mediates the biosynthesis of a highly modified cyclo-arginine-tryptophan dipeptide (cRW). The sequence is that of MFS-type transporter avaJ from Aspergillus versicolor.